We begin with the raw amino-acid sequence, 229 residues long: Ribulose-phosphate 3-epimerase (229 aa).

Serine 12 is a binding site for substrate. 3 residues coordinate a divalent metal cation: histidine 37, aspartate 39, and histidine 70. Aspartate 39 (proton acceptor) is an active-site residue. Substrate contacts are provided by residues histidine 70, 146-149 (GFTG), 181-183 (DGG), and 203-204 (AS). Aspartate 181 is an a divalent metal cation binding site. Residue aspartate 181 is the Proton donor of the active site.

It belongs to the ribulose-phosphate 3-epimerase family. A divalent metal cation is required as a cofactor.

It carries out the reaction D-ribulose 5-phosphate = D-xylulose 5-phosphate. Its pathway is carbohydrate degradation. In terms of biological role, catalyzes the reversible epimerization of D-ribulose 5-phosphate to D-xylulose 5-phosphate. This Chlamydia pneumoniae (Chlamydophila pneumoniae) protein is Ribulose-phosphate 3-epimerase.